We begin with the raw amino-acid sequence, 90 residues long: Small ribosomal subunit protein uS15 (90 aa).

The protein belongs to the universal ribosomal protein uS15 family. As to quaternary structure, part of the 30S ribosomal subunit. Forms a bridge to the 50S subunit in the 70S ribosome, contacting the 23S rRNA.

In terms of biological role, one of the primary rRNA binding proteins, it binds directly to 16S rRNA where it helps nucleate assembly of the platform of the 30S subunit by binding and bridging several RNA helices of the 16S rRNA. Its function is as follows. Forms an intersubunit bridge (bridge B4) with the 23S rRNA of the 50S subunit in the ribosome. The polypeptide is Small ribosomal subunit protein uS15 (Wolinella succinogenes (strain ATCC 29543 / DSM 1740 / CCUG 13145 / JCM 31913 / LMG 7466 / NCTC 11488 / FDC 602W) (Vibrio succinogenes)).